Consider the following 481-residue polypeptide: CASP8 and FADD-like apoptosis regulator (481 aa).

DED domains are found at residues 6 to 78 and 97 to 172; these read VSAE…RILK and DYRV…LNTK. The interaction with CASP8 stretch occupies residues 6–200; that stretch reads VSAEVIHQVE…QASLPKLSIK (195 aa). The interaction with FADD stretch occupies residues 6-229; the sequence is VSAEVIHQVE…DSQRTLVKTS (224 aa). The interval 6 to 307 is interaction with CASP8 propeptide; it reads VSAEVIHQVE…YASMAQHQDY (302 aa). Positions 197 to 436 are interaction with CASP3; it reads LSIKYNSRLQ…KLSQQLKQGR (240 aa). Residues 197–481 are interaction with TRAF1 and TRAF2; sequence LSIKYNSRLQ…LRKKLILAPT (285 aa). Residues 219-481 form an interaction with CASP8 subunits p18 and p10 region; sequence RDSQRTLVKT…LRKKLILAPT (263 aa). Residues 265 to 360 are caspase; sequence DTKYLQETFT…RGKPKLFFIQ (96 aa). Residues 372-481 form an interaction with CASP8 region; it reads SSLEVDGPSI…LRKKLILAPT (110 aa).

Belongs to the peptidase C14A family. As to quaternary structure, TNFRSF6 stimulation triggers recruitment to the death-inducing signaling complex (DISC) formed by TNFRSF6, FADD and CASP8. A proteolytic fragment (p43) stays associated with the DISC. Interacts with RIPK1. Proteolytically processed by CASP8 generating subunits p43 and p12. In terms of tissue distribution, highly expressed in heart.

Its function is as follows. Apoptosis regulator protein which may function as a crucial link between cell survival and cell death pathways in mammalian cells. Acts as an inhibitor of TNFRSF6 mediated apoptosis. A proteolytic fragment (p43) is likely retained in the death-inducing signaling complex (DISC) thereby blocking further recruitment and processing of caspase-8 at the complex. Full length and shorter isoforms have been shown either to induce apoptosis or to reduce TNFRSF-triggered apoptosis. Lacks enzymatic (caspase) activity. The polypeptide is CASP8 and FADD-like apoptosis regulator (Cflar) (Mus musculus (Mouse)).